Here is a 152-residue protein sequence, read N- to C-terminus: Ubiquitin-conjugating enzyme E2 N (152 aa).

The UBC core domain occupies 3–149; it reads GLPRRIIKET…ARAWTRLYAM (147 aa). An N6-acetyllysine modification is found at K82. C87 functions as the Glycyl thioester intermediate in the catalytic mechanism. A Glycyl lysine isopeptide (Lys-Gly) (interchain with G-Cter in ISG15) cross-link involves residue K92. Phosphoserine is present on S131.

The protein belongs to the ubiquitin-conjugating enzyme family. Heterodimer with UBE2V2. Interacts (UBE2V2-UBE2N heterodimer) with the E3 ligase STUB1 (via the U-box domain); the complex has a specific 'Lys-63'-linked polyubiquitination activity. Interacts with RNF8 and RNF168. Interacts with RNF11. Interacts with the E3 ligases, HLTF and SHPRH; the interactions promote the 'Lys-63'-linked polyubiquitination of PCNA upon genotoxic stress and lead to DNA repair. Interacts with ARIH2 (via RING-type 2). Interacts with OTUB1; leading to inhibit E2-conjugating activity. Interacts with GPS2; leading to inhibit E2-conjugating activity. Interacts with RIGI and RNF135; involved in RIGI ubiquitination and activation. In terms of processing, conjugation to ISG15 impairs formation of the thioester bond with ubiquitin but not interaction with UBE2V2.

The enzyme catalyses S-ubiquitinyl-[E1 ubiquitin-activating enzyme]-L-cysteine + [E2 ubiquitin-conjugating enzyme]-L-cysteine = [E1 ubiquitin-activating enzyme]-L-cysteine + S-ubiquitinyl-[E2 ubiquitin-conjugating enzyme]-L-cysteine.. It participates in protein modification; protein ubiquitination. Activity is inhibited by binding to OTUB1, which prevents 'Lys-63'-linked polyubiquitination. Activity is inhibited by GPS2, leading to prevent 'Lys-63'-linked polyubiquitination. Its function is as follows. The UBE2V1-UBE2N and UBE2V2-UBE2N heterodimers catalyze the synthesis of non-canonical 'Lys-63'-linked polyubiquitin chains. This type of polyubiquitination does not lead to protein degradation by the proteasome. Mediates transcriptional activation of target genes. Plays a role in the control of progress through the cell cycle and differentiation. Plays a role in the error-free DNA repair pathway and contributes to the survival of cells after DNA damage. Acts together with the E3 ligases, HLTF and SHPRH, in the 'Lys-63'-linked poly-ubiquitination of PCNA upon genotoxic stress, which is required for DNA repair. Appears to act together with E3 ligase RNF5 in the 'Lys-63'-linked polyubiquitination of JKAMP thereby regulating JKAMP function by decreasing its association with components of the proteasome and ERAD. Promotes TRIM5 capsid-specific restriction activity and the UBE2V1-UBE2N heterodimer acts in concert with TRIM5 to generate 'Lys-63'-linked polyubiquitin chains which activate the MAP3K7/TAK1 complex which in turn results in the induction and expression of NF-kappa-B and MAPK-responsive inflammatory genes. Together with RNF135 and UB2V1, catalyzes the viral RNA-dependent 'Lys-63'-linked polyubiquitination of RIGI to activate the downstream signaling pathway that leads to interferon beta production. UBE2V1-UBE2N together with TRAF3IP2 E3 ubiquitin ligase mediate 'Lys-63'-linked polyubiquitination of TRAF6, a component of IL17A-mediated signaling pathway. This Rattus norvegicus (Rat) protein is Ubiquitin-conjugating enzyme E2 N (Ube2n).